The following is a 400-amino-acid chain: tRNA-specific 2-thiouridylase MnmA (400 aa).

ATP is bound by residues 19–26 (AMSGGVDS) and leucine 45. Cysteine 113 (nucleophile) is an active-site residue. A disulfide bond links cysteine 113 and cysteine 210. ATP is bound at residue glycine 137. Residues 160–162 (RDQ) form an interaction with tRNA region. Cysteine 210 (cysteine persulfide intermediate) is an active-site residue.

The protein belongs to the MnmA/TRMU family.

Its subcellular location is the cytoplasm. It catalyses the reaction S-sulfanyl-L-cysteinyl-[protein] + uridine(34) in tRNA + AH2 + ATP = 2-thiouridine(34) in tRNA + L-cysteinyl-[protein] + A + AMP + diphosphate + H(+). Its function is as follows. Catalyzes the 2-thiolation of uridine at the wobble position (U34) of tRNA, leading to the formation of s(2)U34. In Rhodopseudomonas palustris (strain BisA53), this protein is tRNA-specific 2-thiouridylase MnmA.